The sequence spans 305 residues: tRNA pseudouridine synthase B (305 aa).

The active-site Nucleophile is the Asp-48.

The protein belongs to the pseudouridine synthase TruB family. Type 1 subfamily.

It catalyses the reaction uridine(55) in tRNA = pseudouridine(55) in tRNA. Its function is as follows. Responsible for synthesis of pseudouridine from uracil-55 in the psi GC loop of transfer RNAs. This is tRNA pseudouridine synthase B from Mannheimia succiniciproducens (strain KCTC 0769BP / MBEL55E).